A 181-amino-acid polypeptide reads, in one-letter code: Transcription termination/antitermination protein NusG (181 aa).

The KOW domain maps to 130 to 161 (PGEMVRVNDGPFADFNGVVEEVDYEKSRLKVS).

The protein belongs to the NusG family. In terms of assembly, monomer. Interacts with the transcription termination factor Rho and with RNA polymerase.

Participates in transcription elongation, termination and antitermination. In the absence of Rho, increases the rate of transcription elongation by the RNA polymerase (RNAP), probably by partially suppressing pausing. In the presence of Rho, modulates most Rho-dependent termination events by interacting with the RNAP to render the complex more susceptible to the termination activity of Rho. May be required to overcome a kinetic limitation of Rho to function at certain terminators. Also involved in ribosomal RNA transcriptional antitermination. The protein is Transcription termination/antitermination protein NusG of Salmonella typhi.